The chain runs to 224 residues: V-type proton ATPase subunit S1-like protein (224 aa).

The helical transmembrane segment at 147–167 (PAFLIGLAMSLILLLVLAYAL) threads the bilayer.

This sequence belongs to the vacuolar ATPase subunit S1 family.

It localises to the membrane. This is V-type proton ATPase subunit S1-like protein (ATP6AP1L) from Homo sapiens (Human).